The chain runs to 102 residues: Putative pterin-4-alpha-carbinolamine dehydratase (102 aa).

Belongs to the pterin-4-alpha-carbinolamine dehydratase family.

It catalyses the reaction (4aS,6R)-4a-hydroxy-L-erythro-5,6,7,8-tetrahydrobiopterin = (6R)-L-erythro-6,7-dihydrobiopterin + H2O. The chain is Putative pterin-4-alpha-carbinolamine dehydratase from Burkholderia vietnamiensis (strain G4 / LMG 22486) (Burkholderia cepacia (strain R1808)).